Consider the following 281-residue polypeptide: Cardosin-F (281 aa).

The 261-residue stretch at 18–278 (YYGEIGIGTP…DYGNLLVGFA (261 aa)) folds into the Peptidase A1 domain. Asp36 is an active-site residue. A disulfide bridge links Cys181 with Cys185. Asp190 is an active-site residue. Asn213 carries N-linked (GlcNAc...) asparagine glycosylation.

This sequence belongs to the peptidase A1 family. Heterodimer of a light chain and a heavy chain. An intermediate form is produced first, and undergoes proteolytic processing to remove the internal plant-specific insert (PSI) and the propeptide. In terms of processing, N-glycosylated. In terms of tissue distribution, pistils.

It is found in the microsome membrane. Its subcellular location is the protein storage vacuole. It localises to the secreted. The protein resides in the cell wall. The protein localises to the extracellular space. It is found in the extracellular matrix. With respect to regulation, inhibited by pepstatin. Its function is as follows. Aspartic protease with a high preference for bonds between hydrophobic residues. In Cynara cardunculus (Cardoon), this protein is Cardosin-F.